A 219-amino-acid polypeptide reads, in one-letter code: Transmembrane protein 179B (219 aa).

The next 4 membrane-spanning stretches (helical) occupy residues 9 to 29 (VELA…AAMT), 65 to 85 (FVAG…LFWI), 96 to 116 (GAIG…LVLV), and 167 to 187 (TSSW…VVQW). Residues 198-219 (ERGDPEWSSETDALVGSRLSHS) form a disordered region. Residues Ser206 and Ser214 each carry the phosphoserine modification.

This sequence belongs to the TMEM179 family.

The protein localises to the membrane. The polypeptide is Transmembrane protein 179B (TMEM179B) (Homo sapiens (Human)).